The sequence spans 333 residues: uncharacterized protein (333 aa).

The 274-residue stretch at 45–318 (NVIVSDSMFI…EYVKIIHPKI (274 aa)) folds into the Fe/B12 periplasmic-binding domain.

This is an uncharacterized protein from Methanocaldococcus jannaschii (strain ATCC 43067 / DSM 2661 / JAL-1 / JCM 10045 / NBRC 100440) (Methanococcus jannaschii).